The sequence spans 406 residues: Tyrosine--tRNA ligase (406 aa).

Y35 contributes to the L-tyrosine binding site. The 'HIGH' region signature appears at 40–49; sequence PTADSLHVGH. L-tyrosine is bound by residues Y168 and Q172. Residues 228–232 carry the 'KMSKS' region motif; it reads KMGKT. K231 is a binding site for ATP. Positions 340–405 constitute an S4 RNA-binding domain; that stretch reads STVLDVIAKV…GKKNYNKIEI (66 aa).

It belongs to the class-I aminoacyl-tRNA synthetase family. TyrS type 1 subfamily. In terms of assembly, homodimer.

Its subcellular location is the cytoplasm. It catalyses the reaction tRNA(Tyr) + L-tyrosine + ATP = L-tyrosyl-tRNA(Tyr) + AMP + diphosphate + H(+). Its function is as follows. Catalyzes the attachment of tyrosine to tRNA(Tyr) in a two-step reaction: tyrosine is first activated by ATP to form Tyr-AMP and then transferred to the acceptor end of tRNA(Tyr). The protein is Tyrosine--tRNA ligase of Clostridium botulinum (strain Eklund 17B / Type B).